A 189-amino-acid chain; its full sequence is Selenoprotein S (189 aa).

Residues 29 to 49 form a helical membrane-spanning segment; that stretch reads VVLSSYGWYILLGCILIYLLI. Basic and acidic residues predominate over residues 114–125; the sequence is IETWDRMKEGKS. The interval 114 to 189 is disordered; it reads IETWDRMKEG…RRGPSSGGUG (76 aa). A compositionally biased stretch (low complexity) spans 136 to 147; the sequence is PSPSTSTSAATK. A compositionally biased stretch (basic and acidic residues) spans 148 to 157; that stretch reads PKQEKQERKT. Residue Sec-188 is a non-standard amino acid, selenocysteine.

The protein belongs to the selenoprotein S family.

Its subcellular location is the endoplasmic reticulum membrane. It localises to the cytoplasm. Functionally, involved in the degradation process of misfolded endoplasmic reticulum (ER) luminal proteins. Participates in the transfer of misfolded proteins from the ER to the cytosol, where they are destroyed by the proteasome in a ubiquitin-dependent manner. The polypeptide is Selenoprotein S (vimp) (Xenopus tropicalis (Western clawed frog)).